The primary structure comprises 827 residues: Transcription factor SOX-6 (827 aa).

Residues 1–10 (MSSKQATSPF) are compositionally biased toward polar residues. The disordered stretch occupies residues 1 to 51 (MSSKQATSPFACTADGEEAMTQDLTSREKEEGSDQHPASHLPLHPIMHNKP). Basic and acidic residues predominate over residues 25-34 (TSREKEEGSD). T119 is modified (phosphothreonine). The stretch at 184–262 (LAEKERQLST…LLQQQIQVQG (79 aa)) forms a coiled coil. Disordered regions lie at residues 334 to 361 (QINPRLKGISDRFGRNLDPSEHGGGHSY) and 379 to 470 (VSPG…PIGG). The span at 341–357 (GISDRFGRNLDPSEHGG) shows a compositional bias: basic and acidic residues. Position 399 is a phosphoserine (S399). Position 401 is a phosphothreonine (T401). Residues K404 and K417 each participate in a glycyl lysine isopeptide (Lys-Gly) (interchain with G-Cter in SUMO) cross-link. 2 stretches are compositionally biased toward polar residues: residues 421–431 (TAQPLNLSSRP) and 439–461 (SPTSPTQNLFPASKTSPVNLPNK). S439 and S442 each carry phosphoserine. The HMG box DNA-binding region spans 620–688 (IKRPMNAFMV…IHLEKYPNYK (69 aa)). 2 disordered regions span residues 752 to 772 (TPSPQMTSDCSSTSASPEPSL) and 786 to 827 (ASLA…VSAN). Acidic residues predominate over residues 795-808 (NGEDEMEAYDDYED).

As to quaternary structure, homodimer. Interacts with DAZAP2. May interact with CENPK. Post-translationally, sumoylation inhibits the transcriptional activity. As to expression, highly expressed in testis.

The protein localises to the nucleus. Its subcellular location is the cytoplasm. Functionally, transcription factor that plays a key role in several developmental processes, including neurogenesis, chondrocytes differentiation and cartilage formation. Specifically binds the 5'-AACAAT-3' DNA motif present in enhancers and super-enhancers and promotes expression of genes important for chondrogenesis. Required for overt chondrogenesis when condensed prechondrocytes differentiate into early stage chondrocytes: SOX5 and SOX6 cooperatively bind with SOX9 on active enhancers and super-enhancers associated with cartilage-specific genes, and thereby potentiate SOX9's ability to transactivate. Not involved in precartilaginous condensation, the first step in chondrogenesis, during which skeletal progenitors differentiate into prechondrocytes. Together with SOX5, required to form and maintain a pool of highly proliferating chondroblasts between epiphyses and metaphyses, to form columnar chondroblasts, delay chondrocyte prehypertrophy but promote hypertrophy, and to delay terminal differentiation of chondrocytes on contact with ossification fronts. Binds to the proximal promoter region of the myelin protein MPZ gene, and is thereby involved in the differentiation of oligodendroglia in the developing spinal tube. Binds to the gene promoter of MBP and acts as a transcriptional repressor. This chain is Transcription factor SOX-6, found in Mus musculus (Mouse).